The chain runs to 237 residues: MGGHSFTFKQFHIDQDRCAMKVGTDSIVLGSWTPVRGAKRILDIGTGTGILALMLAQRTAQQVQIDAVELDKDAVKQAEENINASPWRERIRVIRHDIRTFQAPHYDLIISNPPYFVHGQTLPDAARQLARHTGELDQTALLESAARLLTPFGKLALVLPVEEGEQLVALATAGGWYLQRRCRVETKRGKAPNLVLLLLSRKPAETEEEQLCLRETDNRYSPEFIALADEFYLRMSA.

This sequence belongs to the methyltransferase superfamily. tRNA (adenine-N(6)-)-methyltransferase family.

It is found in the cytoplasm. The enzyme catalyses adenosine(37) in tRNA1(Val) + S-adenosyl-L-methionine = N(6)-methyladenosine(37) in tRNA1(Val) + S-adenosyl-L-homocysteine + H(+). Specifically methylates the adenine in position 37 of tRNA(1)(Val) (anticodon cmo5UAC). In Tolumonas auensis (strain DSM 9187 / NBRC 110442 / TA 4), this protein is tRNA1(Val) (adenine(37)-N6)-methyltransferase.